The chain runs to 258 residues: Tryptophan synthase alpha chain (258 aa).

Residues Glu-52 and Asp-63 each act as proton acceptor in the active site.

This sequence belongs to the TrpA family. Tetramer of two alpha and two beta chains.

The catalysed reaction is (1S,2R)-1-C-(indol-3-yl)glycerol 3-phosphate + L-serine = D-glyceraldehyde 3-phosphate + L-tryptophan + H2O. It functions in the pathway amino-acid biosynthesis; L-tryptophan biosynthesis; L-tryptophan from chorismate: step 5/5. Its function is as follows. The alpha subunit is responsible for the aldol cleavage of indoleglycerol phosphate to indole and glyceraldehyde 3-phosphate. The chain is Tryptophan synthase alpha chain from Streptococcus pneumoniae serotype 4 (strain ATCC BAA-334 / TIGR4).